We begin with the raw amino-acid sequence, 841 residues long: Envelope glycoprotein H (841 aa).

The first 17 residues, 1–17 (MFALVLAVVILPLWTTA), serve as a signal peptide directing secretion. Residues asparagine 18, asparagine 45, and asparagine 217 are each glycosylated (N-linked (GlcNAc...) asparagine; by host). The Virion surface segment spans residues 18–802 (NKSYVTPTPA…ERRQAIRMSG (785 aa)). The interaction with gL stretch occupies residues 246–309 (DSGRVEVNIG…DPGPSYRVYL (64 aa)). 5 N-linked (GlcNAc...) asparagine; by host glycosylation sites follow: asparagine 317, asparagine 499, asparagine 522, asparagine 760, and asparagine 783. The helical transmembrane segment at 803–823 (QYLGASLGGAFLAVVGFGIIG) threads the bilayer. Residues 824–841 (WMLCGNSRLREYNKIPLT) are Intravirion-facing.

It belongs to the herpesviridae glycoprotein H family. As to quaternary structure, interacts with glycoprotein L (gL); this interaction is necessary for the correct processing and cell surface expression of gH. The heterodimer gH/gL seems to interact with gB trimers during fusion. In terms of processing, N-glycosylated, O-glycosylated, and sialylated.

It is found in the virion membrane. It localises to the host cell membrane. The protein localises to the host endosome membrane. Functionally, the heterodimer glycoprotein H-glycoprotein L is required for the fusion of viral and plasma membranes leading to virus entry into the host cell. Following initial binding to host receptor, membrane fusion is mediated by the fusion machinery composed of gB and the heterodimer gH/gL. May also be involved in the fusion between the virion envelope and the outer nuclear membrane during virion morphogenesis. The polypeptide is Envelope glycoprotein H (Varicella-zoster virus (strain Dumas) (HHV-3)).